The following is a 346-amino-acid chain: UPF0283 membrane protein VP1870 (346 aa).

A disordered region spans residues 1–30 (MSELKQKQIFSEKALEKEQQSDSPELTAQK). Positions 21–30 (SDSPELTAQK) are enriched in polar residues. 2 helical membrane passes run 73–93 (VFAT…VTAV) and 98–118 (WLAL…LGAI).

It belongs to the UPF0283 family.

It localises to the cell inner membrane. The sequence is that of UPF0283 membrane protein VP1870 from Vibrio parahaemolyticus serotype O3:K6 (strain RIMD 2210633).